We begin with the raw amino-acid sequence, 301 residues long: HTH-type transcriptional regulator AbaB (301 aa).

In terms of domain architecture, HTH lysR-type spans 1–58; the sequence is MDLALLRTFVTVHRAGSFTRAAALLGLSQPAVTSQIRTLERQLGRPLFLRQARGVTPT. The H-T-H motif DNA-binding region spans 18–37; sequence FTRAAALLGLSQPAVTSQIR.

It belongs to the LysR transcriptional regulatory family.

Functionally, putative regulator that may be involved in stimulating antibiotic production in S.antibioticus. The protein is HTH-type transcriptional regulator AbaB of Streptomyces antibioticus.